Reading from the N-terminus, the 86-residue chain is uncharacterized protein (86 aa).

Retina-specific.

This is an uncharacterized protein from Homo sapiens (Human).